A 592-amino-acid chain; its full sequence is Inactive glycosyltransferase 25 family member 3 (592 aa).

The N-terminal stretch at 1 to 19 (MHVARLLPLLLLLGQQLRA) is a signal peptide. N-linked (GlcNAc...) asparagine glycosylation is found at asparagine 72, asparagine 150, asparagine 234, and asparagine 357. The interval 540–592 (AEWLSDTETSSPWDDDSGRLISQTGSQKALRGPHLHLTGSSGHSLHPHHRDEL) is disordered. A Prevents secretion from ER motif is present at residues 589-592 (RDEL).

Belongs to the glycosyltransferase 25 family.

Its subcellular location is the endoplasmic reticulum lumen. In terms of biological role, probable cell adhesion protein involved in leukocyte transmigration across the blood-brain barrier. Does not express any beta-galactosyltransferase activity in vitro. The sequence is that of Inactive glycosyltransferase 25 family member 3 (Cercam) from Mus musculus (Mouse).